The sequence spans 360 residues: Blue-light-activated histidine kinase 1 (360 aa).

One can recognise a PAS domain in the interval 38–109; sequence LFLETTQQTR…KLREGIAAER (72 aa). At cysteine 85 the chain carries S-4a-FMN cysteine. Positions 109–163 constitute a PAC domain; the sequence is RYTVVDLLNYRKDGIPFWNAVHVGPIYGEDGTLQYFYGSQWDITDIVAERRKAET. The residue at position 173 (histidine 173) is a Phosphohistidine; by autocatalysis. Residues 260–303 form an HWE histidine kinase domain region; it reads RSVTALGLALHELATNAVKYGALSVDAGRVEISWSREDGDVTLV.

FMN binds covalently to cysteine after exposure to blue light and this bond is spontaneously broken in the dark.

The catalysed reaction is ATP + protein L-histidine = ADP + protein N-phospho-L-histidine.. Photosensitive kinase that is involved in increased bacterial virulence upon exposure to light. The sequence is that of Blue-light-activated histidine kinase 1 from Erythrobacter litoralis (strain HTCC2594).